The primary structure comprises 571 residues: Potassium-transporting ATPase potassium-binding subunit (571 aa).

Helical transmembrane passes span 5–25 (GWIQ…PLGS), 64–84 (LAYT…LYAI), 136–156 (GLTH…VALI), 179–199 (LYVL…QGIP), 254–274 (LSNL…TNVF), 285–305 (WAIL…TYWA), 330–350 (FGIA…CGAV), 357–376 (FTAL…EIII), 421–441 (MLGI…ATVV), 488–508 (LAIG…AIAG), and 527–547 (GGLF…LTFF).

It belongs to the KdpA family. In terms of assembly, the system is composed of three essential subunits: KdpA, KdpB and KdpC.

Its subcellular location is the cell inner membrane. Part of the high-affinity ATP-driven potassium transport (or Kdp) system, which catalyzes the hydrolysis of ATP coupled with the electrogenic transport of potassium into the cytoplasm. This subunit binds the periplasmic potassium ions and delivers the ions to the membrane domain of KdpB through an intramembrane tunnel. In Methylobacterium radiotolerans (strain ATCC 27329 / DSM 1819 / JCM 2831 / NBRC 15690 / NCIMB 10815 / 0-1), this protein is Potassium-transporting ATPase potassium-binding subunit.